The sequence spans 236 residues: MIRTLYSDTPFPPLEQALIEPNGLLAAGGDLSPERLISAYRQGIFPWFNPGEIILWWSPDPRMVLFPRELKISRSLHKTLKKNDYQIRTDSAFTEVMQACAAPREDQAGTWIHEEMIAAYTALHQMGVAHSVETWIEGELAGGLYGVAIGRAFFGESMFSRATDASKIALVHLARQLENWGYGLIDCQMKTAHLMSMGAREIPRSQFSKRLNQLNALPGQNRKWYFDFTYPGRSEQ.

The protein belongs to the L/F-transferase family.

It localises to the cytoplasm. The enzyme catalyses N-terminal L-lysyl-[protein] + L-leucyl-tRNA(Leu) = N-terminal L-leucyl-L-lysyl-[protein] + tRNA(Leu) + H(+). It catalyses the reaction N-terminal L-arginyl-[protein] + L-leucyl-tRNA(Leu) = N-terminal L-leucyl-L-arginyl-[protein] + tRNA(Leu) + H(+). The catalysed reaction is L-phenylalanyl-tRNA(Phe) + an N-terminal L-alpha-aminoacyl-[protein] = an N-terminal L-phenylalanyl-L-alpha-aminoacyl-[protein] + tRNA(Phe). In terms of biological role, functions in the N-end rule pathway of protein degradation where it conjugates Leu, Phe and, less efficiently, Met from aminoacyl-tRNAs to the N-termini of proteins containing an N-terminal arginine or lysine. This is Leucyl/phenylalanyl-tRNA--protein transferase from Nitrosomonas europaea (strain ATCC 19718 / CIP 103999 / KCTC 2705 / NBRC 14298).